The primary structure comprises 204 residues: Facilitator of iron transport 3 (204 aa).

Positions 1 to 18 are cleaved as a signal peptide; sequence MKFSSALVLSAVAATALA. Disordered stretches follow at residues 84–104 and 133–175; these read SAAETSSAAETSSADEGSGSS and EGSS…SSTA. Low complexity predominate over residues 135-175; it reads SSNTWSPSSTSTSSEAATSSASTTATTTAETSSSATSSSTA. A lipid anchor (GPI-anchor amidated glycine) is attached at G182. Positions 183–204 are cleaved as a propeptide — removed in mature form; it reads AADAITAGTGLMGAALAAVMLL.

The GPI-anchor is attached to the protein in the endoplasmic reticulum and serves to target the protein to the cell surface. There, the glucosamine-inositol phospholipid moiety is cleaved off and the GPI-modified mannoprotein is covalently attached via its lipidless GPI glycan remnant to the 1,6-beta-glucan of the outer cell wall layer.

Its subcellular location is the secreted. It localises to the cell wall. The protein localises to the membrane. Its function is as follows. Involved in the uptake of non-siderophore and siderophore sources of iron. Has a role in the retention of iron in the cell wall and periplasmic space. In Saccharomyces cerevisiae (strain ATCC 204508 / S288c) (Baker's yeast), this protein is Facilitator of iron transport 3 (FIT3).